We begin with the raw amino-acid sequence, 501 residues long: Adenylosuccinate synthetase 2, chloroplastic (501 aa).

Residues 87-93 (GDEGKGK) and 115-117 (GHT) contribute to the GTP site. Residue aspartate 88 is the Proton acceptor of the active site. Mg(2+) is bound by residues aspartate 88 and glycine 115. IMP-binding positions include 88–91 (DEGK), 113–116 (NAGH), threonine 205, arginine 219, glutamine 300, threonine 315, and arginine 379. Histidine 116 serves as the catalytic Proton donor. 375-381 (NITGRPR) is a substrate binding site. Residues arginine 381, 407–409 (KLD), and 490–492 (GIG) each bind GTP.

The protein belongs to the adenylosuccinate synthetase family. As to quaternary structure, homodimer. Mg(2+) is required as a cofactor.

It is found in the plastid. It localises to the chloroplast. The enzyme catalyses IMP + L-aspartate + GTP = N(6)-(1,2-dicarboxyethyl)-AMP + GDP + phosphate + 2 H(+). The protein operates within purine metabolism; AMP biosynthesis via de novo pathway; AMP from IMP: step 1/2. Its function is as follows. Plays an important role in the de novo pathway and in the salvage pathway of purine nucleotide biosynthesis. Catalyzes the first committed step in the biosynthesis of AMP from IMP. The protein is Adenylosuccinate synthetase 2, chloroplastic of Capsicum frutescens (Cayenne pepper).